A 632-amino-acid chain; its full sequence is MAU2 chromatid cohesion factor homolog (632 aa).

TPR repeat units lie at residues 453–486 (GGFY…ANAE) and 493–526 (SCSL…ASKI).

It belongs to the SCC4/mau-2 family. Interacts with Nipped-B to form the cohesin loading complex.

The protein localises to the nucleus. Its subcellular location is the nucleoplasm. Functionally, required for association of the cohesin complex with chromatin during interphase. Plays a role in sister chromatid cohesion and normal progression through prometaphase. This is MAU2 chromatid cohesion factor homolog from Drosophila sechellia (Fruit fly).